The following is a 418-amino-acid chain: Gamma-glutamyl phosphate reductase (418 aa).

This sequence belongs to the gamma-glutamyl phosphate reductase family.

The protein resides in the cytoplasm. It carries out the reaction L-glutamate 5-semialdehyde + phosphate + NADP(+) = L-glutamyl 5-phosphate + NADPH + H(+). It participates in amino-acid biosynthesis; L-proline biosynthesis; L-glutamate 5-semialdehyde from L-glutamate: step 2/2. Functionally, catalyzes the NADPH-dependent reduction of L-glutamate 5-phosphate into L-glutamate 5-semialdehyde and phosphate. The product spontaneously undergoes cyclization to form 1-pyrroline-5-carboxylate. The chain is Gamma-glutamyl phosphate reductase from Colwellia psychrerythraea (strain 34H / ATCC BAA-681) (Vibrio psychroerythus).